A 373-amino-acid chain; its full sequence is GTPase Obg (373 aa).

Positions 1 to 159 (MKFIDEARIE…RMVRLELKVL (159 aa)) constitute an Obg domain. Residues 128 to 147 (LHFKSSTNRAPRQKTDGKPG) form a disordered region. An OBG-type G domain is found at 160–334 (ADVGLLGMPN…LCYAVFDHIS (175 aa)). GTP-binding positions include 166 to 173 (GMPNAGKS), 191 to 195 (FTTLA), 213 to 216 (DIPG), 284 to 287 (NKLD), and 315 to 317 (SAL). Residues Ser-173 and Thr-193 each coordinate Mg(2+). The interval 354–373 (FREKPQAPAAADDAGTDPQV) is disordered. A compositionally biased stretch (low complexity) spans 359 to 373 (QAPAAADDAGTDPQV).

This sequence belongs to the TRAFAC class OBG-HflX-like GTPase superfamily. OBG GTPase family. In terms of assembly, monomer. Requires Mg(2+) as cofactor.

It localises to the cytoplasm. Its function is as follows. An essential GTPase which binds GTP, GDP and possibly (p)ppGpp with moderate affinity, with high nucleotide exchange rates and a fairly low GTP hydrolysis rate. Plays a role in control of the cell cycle, stress response, ribosome biogenesis and in those bacteria that undergo differentiation, in morphogenesis control. This chain is GTPase Obg, found in Paraburkholderia phytofirmans (strain DSM 17436 / LMG 22146 / PsJN) (Burkholderia phytofirmans).